Reading from the N-terminus, the 120-residue chain is Glycine cleavage system H protein (120 aa).

Residues 19–101 form the Lipoyl-binding domain; sequence DGTVGITDHA…YEGGWLFKLE (83 aa). At K60 the chain carries N6-lipoyllysine.

This sequence belongs to the GcvH family. In terms of assembly, the glycine cleavage system is composed of four proteins: P, T, L and H. It depends on (R)-lipoate as a cofactor.

Its function is as follows. The glycine cleavage system catalyzes the degradation of glycine. The H protein shuttles the methylamine group of glycine from the P protein to the T protein. This Deinococcus deserti (strain DSM 17065 / CIP 109153 / LMG 22923 / VCD115) protein is Glycine cleavage system H protein.